The following is a 133-amino-acid chain: Fatty acid-binding protein, heart (133 aa).

Val2 bears the N-acetylvaline mark. Thr8 is subject to Phosphothreonine. Tyr20 is subject to Phosphotyrosine; by Tyr-kinases. The residue at position 23 (Ser23) is a Phosphoserine. Phosphothreonine is present on Thr30. A Phosphoserine modification is found at Ser83. Residue 127 to 129 (RTY) participates in (9Z)-octadecenoate binding. 127–129 (RTY) lines the hexadecanoate pocket. Octadecanoate is bound at residue 127 to 129 (RTY).

This sequence belongs to the calycin superfamily. Fatty-acid binding protein (FABP) family.

The protein resides in the cytoplasm. Functionally, FABPs are thought to play a role in the intracellular transport of long-chain fatty acids and their acyl-CoA esters. This is Fatty acid-binding protein, heart (FABP3) from Sus scrofa (Pig).